A 622-amino-acid chain; its full sequence is Probable potassium transport system protein Kup (622 aa).

12 consecutive transmembrane segments (helical) span residues 8 to 28 (LAAL…TSVL), 50 to 70 (VLSI…VVLV), 103 to 123 (LGIG…TPAI), 137 to 157 (PHFG…LFAV), 169 to 189 (FGPV…PHIV), 215 to 235 (FIIL…YADL), 247 to 267 (WFSV…ALLL), 285 to 305 (ALIP…QALI), 337 to 357 (IYIP…VVMF), 366 to 386 (AYGI…FFVI), 393 to 413 (PLAL…AFFG), and 419 to 439 (LLQG…LMMT).

It belongs to the HAK/KUP transporter (TC 2.A.72) family.

The protein resides in the cell inner membrane. The catalysed reaction is K(+)(in) + H(+)(in) = K(+)(out) + H(+)(out). Its function is as follows. Transport of potassium into the cell. Likely operates as a K(+):H(+) symporter. The polypeptide is Probable potassium transport system protein Kup (Paracidovorax citrulli (strain AAC00-1) (Acidovorax citrulli)).